Reading from the N-terminus, the 555-residue chain is Lysine--tRNA ligase (555 aa).

The 'HIGH' region motif lies at 37–45 (TSGRLHVGN). The 'KMSKS' region motif lies at 301–305 (AMSSS).

It belongs to the class-I aminoacyl-tRNA synthetase family.

The protein localises to the cytoplasm. It catalyses the reaction tRNA(Lys) + L-lysine + ATP = L-lysyl-tRNA(Lys) + AMP + diphosphate. The protein is Lysine--tRNA ligase of Methanopyrus kandleri (strain AV19 / DSM 6324 / JCM 9639 / NBRC 100938).